Consider the following 72-residue polypeptide: uncharacterized protein (72 aa).

Residues 27-55 (YTQNLINELQEARDSINDLQRAHERLKLV) adopt a coiled-coil conformation.

This is an uncharacterized protein from Schizosaccharomyces pombe (strain 972 / ATCC 24843) (Fission yeast).